Consider the following 128-residue polypeptide: Large ribosomal subunit protein uL22 (128 aa).

This sequence belongs to the universal ribosomal protein uL22 family. Part of the 50S ribosomal subunit.

This protein binds specifically to 23S rRNA; its binding is stimulated by other ribosomal proteins, e.g. L4, L17, and L20. It is important during the early stages of 50S assembly. It makes multiple contacts with different domains of the 23S rRNA in the assembled 50S subunit and ribosome. Functionally, the globular domain of the protein is located near the polypeptide exit tunnel on the outside of the subunit, while an extended beta-hairpin is found that lines the wall of the exit tunnel in the center of the 70S ribosome. This Prochlorococcus marinus (strain MIT 9301) protein is Large ribosomal subunit protein uL22.